Here is a 194-residue protein sequence, read N- to C-terminus: Outer-membrane lipoprotein LolB (194 aa).

Positions Met-1–Gly-18 are cleaved as a signal peptide. Cys-19 is lipidated: N-palmitoyl cysteine. Residue Cys-19 is the site of S-diacylglycerol cysteine attachment.

This sequence belongs to the LolB family. In terms of assembly, monomer.

The protein localises to the cell outer membrane. Functionally, plays a critical role in the incorporation of lipoproteins in the outer membrane after they are released by the LolA protein. The polypeptide is Outer-membrane lipoprotein LolB (Aeromonas salmonicida (strain A449)).